Consider the following 289-residue polypeptide: Bifunctional protein FolD (289 aa).

NADP(+)-binding positions include 165 to 167 (GAS) and Ser190.

Belongs to the tetrahydrofolate dehydrogenase/cyclohydrolase family. Homodimer.

It carries out the reaction (6R)-5,10-methylene-5,6,7,8-tetrahydrofolate + NADP(+) = (6R)-5,10-methenyltetrahydrofolate + NADPH. The catalysed reaction is (6R)-5,10-methenyltetrahydrofolate + H2O = (6R)-10-formyltetrahydrofolate + H(+). It participates in one-carbon metabolism; tetrahydrofolate interconversion. Catalyzes the oxidation of 5,10-methylenetetrahydrofolate to 5,10-methenyltetrahydrofolate and then the hydrolysis of 5,10-methenyltetrahydrofolate to 10-formyltetrahydrofolate. In Ralstonia nicotianae (strain ATCC BAA-1114 / GMI1000) (Ralstonia solanacearum), this protein is Bifunctional protein FolD.